We begin with the raw amino-acid sequence, 84 residues long: Cell division topological specificity factor (84 aa).

Belongs to the MinE family.

Prevents the cell division inhibition by proteins MinC and MinD at internal division sites while permitting inhibition at polar sites. This ensures cell division at the proper site by restricting the formation of a division septum at the midpoint of the long axis of the cell. The polypeptide is Cell division topological specificity factor (Pseudomonas fluorescens (strain ATCC BAA-477 / NRRL B-23932 / Pf-5)).